The primary structure comprises 297 residues: MSLTRRPPKSPPQRPPRISGVVRLRLDIAYDGTDFAGWAAQVGQRTVAGDLDAALTTIFRTPVRLRAAGRTDAGVHASGQVAHVDVPADALPNAYPRAGHVGDPEFLPLLRRLGRFLPADVRILDITRAPAGFDARFSALRRHYVYRLSTAPYGVEPQQARYITAWPRELDLDAMTAASRDLMGLHDFAAFCRHREGATTIRDLQRLDWSRAGTLVTAHVTADAFCWSMVRSLVGALLAVGEHRRATTWCRELLTATGRSSDFAVAPAHGLTLIQVDYPPDDQLASRNLVTRDVRSG.

Residue D72 is the Nucleophile of the active site. A substrate-binding site is contributed by Y144.

It belongs to the tRNA pseudouridine synthase TruA family. As to quaternary structure, homodimer.

The catalysed reaction is uridine(38/39/40) in tRNA = pseudouridine(38/39/40) in tRNA. Formation of pseudouridine at positions 38, 39 and 40 in the anticodon stem and loop of transfer RNAs. The sequence is that of tRNA pseudouridine synthase A from Mycobacterium bovis (strain ATCC BAA-935 / AF2122/97).